The following is a 470-amino-acid chain: 3-isopropylmalate dehydratase large subunit (470 aa).

[4Fe-4S] cluster contacts are provided by Cys351, Cys411, and Cys414.

Belongs to the aconitase/IPM isomerase family. LeuC type 1 subfamily. In terms of assembly, heterodimer of LeuC and LeuD. [4Fe-4S] cluster is required as a cofactor.

It catalyses the reaction (2R,3S)-3-isopropylmalate = (2S)-2-isopropylmalate. It functions in the pathway amino-acid biosynthesis; L-leucine biosynthesis; L-leucine from 3-methyl-2-oxobutanoate: step 2/4. Functionally, catalyzes the isomerization between 2-isopropylmalate and 3-isopropylmalate, via the formation of 2-isopropylmaleate. This is 3-isopropylmalate dehydratase large subunit from Rhodopseudomonas palustris (strain HaA2).